The following is a 335-amino-acid chain: 34 kDa spicule matrix protein (335 aa).

An N-terminal signal peptide occupies residues 1–17 (MKGLLLILASLVAIATG). The C-type lectin domain maps to 29-194 (SGASCYRYFN…ATAMRAFVCE (166 aa)). C50 and C193 are oxidised to a cystine. The tract at residues 199 to 335 (QNIPPGQQPG…QEAETDVTGS (137 aa)) is disordered. Over residues 207–310 (PGFGGQQPGF…GGPQRPGMGG (104 aa)) the composition is skewed to gly residues. Positions 311-323 (QPNSPNPRFNRPR) are enriched in low complexity.

This sequence belongs to the SM50 family. In terms of tissue distribution, embryo spicule.

The protein localises to the secreted. Major matrix protein of the sea urchin embryo spicule which directs crystal growth in certain orientations and inhibit growth in others. The chain is 34 kDa spicule matrix protein from Lytechinus pictus (Painted sea urchin).